Consider the following 72-residue polypeptide: Defensin-like protein 35 (72 aa).

The signal sequence occupies residues 1 to 22 (MASNKISFSFVLCLYMCSLLDA). 3 disulfide bridges follow: Cys-32-Cys-58, Cys-44-Cys-67, and Cys-48-Cys-69.

Belongs to the DEFL family.

The protein resides in the secreted. The polypeptide is Defensin-like protein 35 (Arabidopsis thaliana (Mouse-ear cress)).